Here is a 335-residue protein sequence, read N- to C-terminus: G-protein coupled receptor 157 (335 aa).

Residues 1–15 (MQPSPPPTELVPSER) are Extracellular-facing. Residues 16–36 (AVVLLSCALSALGSGLLVATH) traverse the membrane as a helical segment. The Cytoplasmic portion of the chain corresponds to 37-48 (ALWPDLRSRARR). Residues 49–69 (LLLFLSLADLLSAASYFYGVL) form a helical membrane-spanning segment. Over 70-87 (QNFAGPSWDCVLQGALST) the chain is Extracellular. Residues 88-108 (FANTSSFFWTVAIALYLYLSI) form a helical membrane-spanning segment. Topologically, residues 109-119 (VRAARGPRTDR) are cytoplasmic. Residues 120–140 (LLWAFHVVSWGVPLVITVAAV) traverse the membrane as a helical segment. The Extracellular portion of the chain corresponds to 141-166 (ALKKIGYDASDVSVGWCWIDLEAKDH). A helical transmembrane segment spans residues 167 to 187 (VLWMLLTGKLWEMLAYVLLPL). The Cytoplasmic segment spans residues 188–226 (LYLLVRKHINRAHTALSEYRPILSQEHRLLRHSSMADKK). Residues 227 to 247 (LVLIPLIFIGLRVWSTVRFVL) form a helical membrane-spanning segment. Topologically, residues 248–258 (TLCGSPAVQTP) are extracellular. The chain crosses the membrane as a helical span at residues 259–279 (VLVVLHGIGNTFQGGANCIMF). Topologically, residues 280-335 (VLCTRAVRTRLFSLCCCCCSSQPPTKSPAGTPKAPAPSKPGESQESQGTPGELPST) are cytoplasmic. The tract at residues 300–335 (SQPPTKSPAGTPKAPAPSKPGESQESQGTPGELPST) is disordered. Positions 320-335 (GESQESQGTPGELPST) are enriched in polar residues.

This sequence belongs to the G-protein coupled receptor 2 family.

The protein resides in the cell projection. It is found in the cilium membrane. Orphan receptor that promotes neuronal differentiation of radial glial progenitors (RGPs). The activity of this receptor is mediated by a G(q)-protein that activates a phosphatidylinositol-calcium second messenger. The chain is G-protein coupled receptor 157 (GPR157) from Homo sapiens (Human).